We begin with the raw amino-acid sequence, 346 residues long: MAMAQKLSHLLPSLRQVIQEPQLSLQPEPVFTVDRAEVPPLFWKPYIYAGYRPLHQTWRFYFRTLFQQHNEAVNVWTHLLAALVLLLRLALFVETVDFWGDPHALPLFIIVLASFTYLSFSALAHLLQAKSEFWHYSFFFLDYVGVAVYQFGSALAHFYYAIEPAWHAQVQAVFLPMAAFLAWLSCIGSCYNKYIQKPGLLGRTCQEVPSVLAYALDISPVVHRIFVSSDPTTDDPALLYHKCQVVFFLLAAAFFSTFMPERWFPGSCHVFGQGHQLFHIFLVLCTLAQLEAVALDYEARRPIYEPLHTHWPHNFSGLFLLTVGSSILTAFLLSQLVQRKLDQKTK.

At 1 to 72 (MAMAQKLSHL…RTLFQQHNEA (72 aa)) the chain is on the cytoplasmic side. A helical membrane pass occupies residues 73-93 (VNVWTHLLAALVLLLRLALFV). The Extracellular segment spans residues 94–103 (ETVDFWGDPH). The helical transmembrane segment at 104-124 (ALPLFIIVLASFTYLSFSALA) threads the bilayer. Residues 125–137 (HLLQAKSEFWHYS) are Cytoplasmic-facing. A helical transmembrane segment spans residues 138-158 (FFFLDYVGVAVYQFGSALAHF). Residues 159 to 169 (YYAIEPAWHAQ) lie on the Extracellular side of the membrane. A helical membrane pass occupies residues 170–190 (VQAVFLPMAAFLAWLSCIGSC). Residues 191–237 (YNKYIQKPGLLGRTCQEVPSVLAYALDISPVVHRIFVSSDPTTDDPA) lie on the Cytoplasmic side of the membrane. A helical membrane pass occupies residues 238–258 (LLYHKCQVVFFLLAAAFFSTF). The Extracellular segment spans residues 259-276 (MPERWFPGSCHVFGQGHQ). The chain crosses the membrane as a helical span at residues 277–297 (LFHIFLVLCTLAQLEAVALDY). At 298-316 (EARRPIYEPLHTHWPHNFS) the chain is on the cytoplasmic side. A helical transmembrane segment spans residues 317 to 337 (GLFLLTVGSSILTAFLLSQLV). The Extracellular portion of the chain corresponds to 338–346 (QRKLDQKTK).

Belongs to the ADIPOR family. As to expression, expressed in a wide range of tissues including ovary, testis, placenta, uterus and bladder.

The protein resides in the cell membrane. Functionally, plasma membrane progesterone (P4) receptor coupled to G proteins. Seems to act through a G(i) mediated pathway. May be involved in oocyte maturation. Involved in neurosteroid inhibition of apoptosis. Also binds dehydroepiandrosterone (DHEA), pregnanolone, pregnenolone and allopregnanolone. The protein is Membrane progestin receptor alpha of Homo sapiens (Human).